The following is a 766-amino-acid chain: Discoidin domain-containing receptor A (766 aa).

An N-terminal signal peptide occupies residues 1 to 18 (MQIALVLLAIYGTTTTNT). Residues 19-372 (LRIDQCGENA…PPSSAATQQL (354 aa)) lie on the Extracellular side of the membrane. F5/8 type C domains follow at residues 24-180 (CGEN…IHGC) and 195-351 (SRLD…FTSA). A disulfide bridge connects residues cysteine 24 and cysteine 180. Residues asparagine 87, asparagine 103, asparagine 129, asparagine 242, asparagine 268, asparagine 311, and asparagine 353 are each glycosylated (N-linked (GlcNAc...) asparagine). Residues 373 to 393 (LVVCGIIFLTIFACVAYCVSV) traverse the membrane as a helical segment. Residues 394–766 (CLKRRQKNKS…FERLVKPFQD (373 aa)) are Cytoplasmic-facing. A disordered region spans residues 475-501 (NFPPPPEGREEHTYSQPVSPENSSNGS). Residues 488–501 (YSQPVSPENSSNGS) show a composition bias toward polar residues. The Protein kinase domain occupies 519–766 (LLIGKAIGEG…FERLVKPFQD (248 aa)). Residues 525-533 (IGEGKFTMI) and lysine 547 contribute to the ATP site.

Belongs to the protein kinase superfamily. Tyr protein kinase family. Insulin receptor subfamily. Expressed in neurons in head and tail, some motoneurons in ventral nerve cord, in PVP interneurons, pharynx and stomato-intestinal muscle.

Its subcellular location is the cell membrane. It is found in the cell projection. The protein localises to the axon. It localises to the perikaryon. Its function is as follows. Receptor which, together with svh-4, is involved in axon guidance to establish the tracts for the ventral and dorsal nerve cords during nervous system development. May play a role in axon regeneration following injury in D-type motor neurons. The protein is Discoidin domain-containing receptor A of Caenorhabditis elegans.